Consider the following 252-residue polypeptide: Triosephosphate isomerase (252 aa).

10 to 12 (NWK) is a binding site for substrate. H96 (electrophile) is an active-site residue. E168 (proton acceptor) is an active-site residue. Residues G174, S214, and 235-236 (GG) contribute to the substrate site.

The protein belongs to the triosephosphate isomerase family. Homodimer.

The protein resides in the cytoplasm. The catalysed reaction is D-glyceraldehyde 3-phosphate = dihydroxyacetone phosphate. It participates in carbohydrate biosynthesis; gluconeogenesis. The protein operates within carbohydrate degradation; glycolysis; D-glyceraldehyde 3-phosphate from glycerone phosphate: step 1/1. In terms of biological role, involved in the gluconeogenesis. Catalyzes stereospecifically the conversion of dihydroxyacetone phosphate (DHAP) to D-glyceraldehyde-3-phosphate (G3P). The sequence is that of Triosephosphate isomerase from Streptococcus pyogenes serotype M18 (strain MGAS8232).